The primary structure comprises 404 residues: Dual-specificity RNA methyltransferase RlmN (404 aa).

Catalysis depends on E119, which acts as the Proton acceptor. Positions 126–358 constitute a Radical SAM core domain; it reads VGRAGALCVS…NKAGYSSPIR (233 aa). C133 and C369 are joined by a disulfide. Residues C140, C144, and C147 each coordinate [4Fe-4S] cluster. S-adenosyl-L-methionine is bound by residues 195 to 196, S227, 249 to 251, and N326; these read GE and SLH. Catalysis depends on C369, which acts as the S-methylcysteine intermediate.

This sequence belongs to the radical SAM superfamily. RlmN family. Requires [4Fe-4S] cluster as cofactor.

It localises to the cytoplasm. It carries out the reaction adenosine(2503) in 23S rRNA + 2 reduced [2Fe-2S]-[ferredoxin] + 2 S-adenosyl-L-methionine = 2-methyladenosine(2503) in 23S rRNA + 5'-deoxyadenosine + L-methionine + 2 oxidized [2Fe-2S]-[ferredoxin] + S-adenosyl-L-homocysteine. The enzyme catalyses adenosine(37) in tRNA + 2 reduced [2Fe-2S]-[ferredoxin] + 2 S-adenosyl-L-methionine = 2-methyladenosine(37) in tRNA + 5'-deoxyadenosine + L-methionine + 2 oxidized [2Fe-2S]-[ferredoxin] + S-adenosyl-L-homocysteine. Functionally, specifically methylates position 2 of adenine 2503 in 23S rRNA and position 2 of adenine 37 in tRNAs. m2A2503 modification seems to play a crucial role in the proofreading step occurring at the peptidyl transferase center and thus would serve to optimize ribosomal fidelity. In Caulobacter sp. (strain K31), this protein is Dual-specificity RNA methyltransferase RlmN.